The chain runs to 149 residues: D-aminoacyl-tRNA deacylase (149 aa).

A Gly-cisPro motif, important for rejection of L-amino acids motif is present at residues 141-142; it reads GP.

It belongs to the DTD family. As to quaternary structure, homodimer.

The protein resides in the cytoplasm. It catalyses the reaction glycyl-tRNA(Ala) + H2O = tRNA(Ala) + glycine + H(+). The catalysed reaction is a D-aminoacyl-tRNA + H2O = a tRNA + a D-alpha-amino acid + H(+). An aminoacyl-tRNA editing enzyme that deacylates mischarged D-aminoacyl-tRNAs. Also deacylates mischarged glycyl-tRNA(Ala), protecting cells against glycine mischarging by AlaRS. Acts via tRNA-based rather than protein-based catalysis; rejects L-amino acids rather than detecting D-amino acids in the active site. By recycling D-aminoacyl-tRNA to D-amino acids and free tRNA molecules, this enzyme counteracts the toxicity associated with the formation of D-aminoacyl-tRNA entities in vivo and helps enforce protein L-homochirality. This chain is D-aminoacyl-tRNA deacylase, found in Streptomyces griseus subsp. griseus (strain JCM 4626 / CBS 651.72 / NBRC 13350 / KCC S-0626 / ISP 5235).